The sequence spans 541 residues: MGQCCTGGGKAVAGDEAEPGTSKAAPPSRGTSSKNGSAKQQPCSPAAKAAATEAAAAASSSKKPAGPIGEVLERPMEEVRTTYSIGKELGRGQFGVTHLCTHKATGEKLACKTIAKRKLANKEDVDDVRREVQIMHHLSGQPNIVDLRGAYEDKHNVHLVMELCAGGELFDRIIARGHYTERAAAALLRAIVGIVHTCHSMGVIHRDLKPENFLLLSKGDDAPLKATDFGLSVFFKEGEVFRDIVGSAYYIAPEVLKRKYGPEADIWSIGVMLYIFLAGVPPFWAESENAIFTAILRGQIDLASEPWPKISSGAKDLVRKMLNINPKERLTAFQVLNHPWIKEDGDAPDVPLDNVVLNRLKQFRAMNQFKKAALRIIAGCLSEEEIKGLKEMFKNIDKDNSGTITLEELKNGLAKQGTKFSDNEIEQLMEAADADGNGIIDYEEFVTATVHMNKMDREEHLYTAFQYFDKDNSGYITKEELEQALKEQGLYDANEIKDVITDADSNNDGRIDYSEFVAMMRKGSGCAEATNPKKKRRDLVL.

Gly residues predominate over residues 1-11 (MGQCCTGGGKA). The tract at residues 1–74 (MGQCCTGGGK…AGPIGEVLER (74 aa)) is disordered. Gly-2 carries N-myristoyl glycine lipidation. The segment covering 38–67 (AKQQPCSPAAKAAATEAAAAASSSKKPAGP) has biased composition (low complexity). Residues 83 to 341 (YSIGKELGRG…AFQVLNHPWI (259 aa)) enclose the Protein kinase domain. ATP is bound by residues 89–97 (LGRGQFGVT) and Lys-112. The active-site Proton acceptor is Asp-207. Residues 347–377 (APDVPLDNVVLNRLKQFRAMNQFKKAALRII) are autoinhibitory domain. 4 EF-hand domains span residues 384–419 (EEIK…QGTK), 420–455 (FSDN…MNKM), 456–491 (DREE…QGLY), and 493–526 (ANEI…GSGC). Ca(2+) is bound by residues Asp-397, Asp-399, Ser-401, Thr-403, Glu-408, Asp-433, Asp-435, Asn-437, Glu-444, Asp-469, Asp-471, Ser-473, Tyr-475, Glu-480, Asp-504, Asn-506, Asp-508, Arg-510, and Glu-515.

It belongs to the protein kinase superfamily. Ser/Thr protein kinase family. CDPK subfamily. As to expression, specifically expressed in heading panicles, spikelets and mature pollen grains. Not expressed in vegetative tissues.

It localises to the membrane. It carries out the reaction L-seryl-[protein] + ATP = O-phospho-L-seryl-[protein] + ADP + H(+). It catalyses the reaction L-threonyl-[protein] + ATP = O-phospho-L-threonyl-[protein] + ADP + H(+). With respect to regulation, activated by calcium. Autophosphorylation may play an important role in the regulation of the kinase activity. Functionally, may play a role in signal transduction pathways that involve calcium as a second messenger. The polypeptide is Calcium-dependent protein kinase 25 (Oryza sativa subsp. japonica (Rice)).